The following is a 207-amino-acid chain: dTTP/UTP pyrophosphatase (207 aa).

Residue D79 is the Proton acceptor of the active site.

This sequence belongs to the Maf family. YhdE subfamily. The cofactor is a divalent metal cation.

The protein localises to the cytoplasm. It catalyses the reaction dTTP + H2O = dTMP + diphosphate + H(+). It carries out the reaction UTP + H2O = UMP + diphosphate + H(+). Functionally, nucleoside triphosphate pyrophosphatase that hydrolyzes dTTP and UTP. May have a dual role in cell division arrest and in preventing the incorporation of modified nucleotides into cellular nucleic acids. This Rhodopseudomonas palustris (strain ATCC BAA-98 / CGA009) protein is dTTP/UTP pyrophosphatase.